The following is a 461-amino-acid chain: Flavin-containing monooxygenase FMO GS-OX-like 8 (461 aa).

Position 20–25 (20–25 (GAGPSG)) interacts with FAD. 220–225 (GCSMSG) is an NADP(+) binding site.

The protein belongs to the FMO family. In terms of assembly, interacts with EER5. It depends on FAD as a cofactor.

Its function is as follows. Catalyzes the conversion of methylthioalkyl glucosinolates of any chain length into methylsulfinylalkyl glucosinolates. This Arabidopsis thaliana (Mouse-ear cress) protein is Flavin-containing monooxygenase FMO GS-OX-like 8.